The primary structure comprises 276 residues: Lyso-ornithine lipid O-acyltransferase (276 aa).

A helical transmembrane segment spans residues 25–47; sequence LALRGGAMALVLMAGLTLHLAVR.

The protein belongs to the 1-acyl-sn-glycerol-3-phosphate acyltransferase family. OlsA subfamily.

It is found in the membrane. It catalyses the reaction a lyso-ornithine lipid + a fatty acyl-[ACP] = an N(2)-[(3R)-3-(acyloxy)acyl]-L-ornithine lipid + holo-[ACP]. The catalysed reaction is a fatty acyl-[ACP] + a 1-acyl-sn-glycero-3-phosphate = a 1,2-diacyl-sn-glycero-3-phosphate + holo-[ACP]. It functions in the pathway lipid metabolism. The protein operates within phospholipid metabolism. In terms of biological role, catalyzes the second step in the formation of ornithine lipids, which are phosphorus-free membrane lipids. Uses acyl-acyl carrier protein (acyl-AcpP) as an acyl donor and converts lyso-ornithine lipid (LOL) into ornithine lipid (OL). It can also act as an alternate acyl-sn-glycerol-3-phosphate acyltransferase (AGPAT) to ensure glycerophospholipid production. In Rhodobacter capsulatus (strain ATCC BAA-309 / NBRC 16581 / SB1003), this protein is Lyso-ornithine lipid O-acyltransferase.